The chain runs to 181 residues: Transcriptional repressor NrdR (181 aa).

A zinc finger spans residues 3–34 (CPYCQHTDSRVLESRSTGAGRSIRRRRECLSC). The ATP-cone domain maps to 49 to 139 (ISVIKRNGQS…VYRQFQGVDD (91 aa)).

It belongs to the NrdR family. The cofactor is Zn(2+).

In terms of biological role, negatively regulates transcription of bacterial ribonucleotide reductase nrd genes and operons by binding to NrdR-boxes. This chain is Transcriptional repressor NrdR, found in Picosynechococcus sp. (strain ATCC 27264 / PCC 7002 / PR-6) (Agmenellum quadruplicatum).